The following is a 90-amino-acid chain: Neuropeptide F (90 aa).

The signal sequence occupies residues 1-27 (MTFSTSSSFSRRALVALLVCTLLIDLS). The tract at residues 54-90 (KHAQHARPRFGKRSYLNPAGYGQDEQEDDWQDSTFTR) is disordered. Positions 56-65 (AQHARPRFGK) are enriched in basic residues. At F63 the chain carries Phenylalanine amide. The propeptide occupies 67–90 (SYLNPAGYGQDEQEDDWQDSTFTR).

It belongs to the NPY family. In terms of tissue distribution, expressed in hemolymph, brain and midgut.

It is found in the secreted. In terms of biological role, an integral part of the sensory system that mediates food signaling, providing the neural basis for the regulation of food response; coordinates larval foraging and social behavior changes during development. May have a hormonal role in females. In Aedes aegypti (Yellowfever mosquito), this protein is Neuropeptide F (npf).